Reading from the N-terminus, the 195-residue chain is Shikimate kinase (195 aa).

33–38 (GAGKTT) provides a ligand contact to ATP. Residue threonine 37 participates in Mg(2+) binding. Positions 55, 79, and 101 each coordinate substrate. Arginine 139 serves as a coordination point for ATP. Substrate is bound at residue arginine 158. Arginine 175 serves as a coordination point for ATP.

The protein belongs to the shikimate kinase family. In terms of assembly, monomer. Mg(2+) serves as cofactor.

It is found in the cytoplasm. The catalysed reaction is shikimate + ATP = 3-phosphoshikimate + ADP + H(+). It participates in metabolic intermediate biosynthesis; chorismate biosynthesis; chorismate from D-erythrose 4-phosphate and phosphoenolpyruvate: step 5/7. Catalyzes the specific phosphorylation of the 3-hydroxyl group of shikimic acid using ATP as a cosubstrate. This is Shikimate kinase from Nitrosospira multiformis (strain ATCC 25196 / NCIMB 11849 / C 71).